A 287-amino-acid polypeptide reads, in one-letter code: MEMO1 family protein MJ0403 (287 aa).

The protein belongs to the MEMO1 family.

In Methanocaldococcus jannaschii (strain ATCC 43067 / DSM 2661 / JAL-1 / JCM 10045 / NBRC 100440) (Methanococcus jannaschii), this protein is MEMO1 family protein MJ0403.